Here is a 248-residue protein sequence, read N- to C-terminus: Cobalt transport protein CbiM (248 aa).

Positions 1–29 (MKRVSVKNYLVCLLIAVCAIFVFPANASA) are cleaved as a signal peptide. 6 helical membrane-spanning segments follow: residues 40-60 (GWCI…FFSI), 72-92 (TLLA…MPSV), 104-124 (LGAV…ILLF), 136-156 (TLGA…FGVF), 167-187 (GLAV…ITSV), and 210-230 (IFGF…VVIY).

This sequence belongs to the CbiM family. In terms of assembly, forms an energy-coupling factor (ECF) transporter complex composed of an ATP-binding protein (A component, CbiO), a transmembrane protein (T component, CbiQ) and 2 possible substrate-capture proteins (S components, CbiM and CbiN) of unknown stoichimetry.

It is found in the cell membrane. It participates in cofactor biosynthesis; adenosylcobalamin biosynthesis. In terms of biological role, part of the energy-coupling factor (ECF) transporter complex CbiMNOQ involved in cobalt import. In Ruminiclostridium cellulolyticum (strain ATCC 35319 / DSM 5812 / JCM 6584 / H10) (Clostridium cellulolyticum), this protein is Cobalt transport protein CbiM.